Reading from the N-terminus, the 299-residue chain is uncharacterized protein (299 aa).

Residues 4–20 (LFFIFVMLIVLLCGCTS) traverse the membrane as a helical segment.

The protein resides in the membrane. This is an uncharacterized protein from Methanocaldococcus jannaschii (strain ATCC 43067 / DSM 2661 / JAL-1 / JCM 10045 / NBRC 100440) (Methanococcus jannaschii).